A 760-amino-acid chain; its full sequence is Protein HEADING DATE 3B (760 aa).

Gly residues-rich tracts occupy residues 1 to 12 (MATRGGGGGGGG) and 60 to 70 (SGGGGGGGVGG). Disordered stretches follow at residues 1-120 (MATR…KINK), 144-169 (SRSTAEAPQRRAENTIKSSSGKRLAD), 236-262 (VKSRTPLKDKEMEAAQTSKNVEVEKSS), and 285-346 (TGII…IEET). The segment covering 71 to 87 (SPAHSTSAASQSQSQSQ) has biased composition (low complexity). The segment covering 94 to 107 (SLFQPFNVPSNRPG) has biased composition (polar residues). Over residues 108–120 (HSTEKINSDKINK) the composition is skewed to basic and acidic residues. The span at 236 to 248 (VKSRTPLKDKEME) shows a compositional bias: basic and acidic residues. Positions 349–355 (KRKRLLE) match the Nuclear localization signal motif. Disordered regions lie at residues 485–543 (LQQP…GVQL) and 707–760 (FPTV…QRDD). Polar residues-rich tracts occupy residues 511–522 (QRDQAATNGVSK), 531–543 (ASDNKQNNWGVQL), and 707–730 (FPTVSAQNNQPQPSYSSRDNQTNV).

In terms of tissue distribution, expressed in mesophyll cells of young leaves, anthers, stigmas and the top of lemmas.

The protein resides in the nucleus. Involved in the regulation of flowering time under short day (SD) and long day (LD) conditions. Functions as a floral promoter by negatively regulating GHD7, a repressor of the photoperiodic control of flowering. Acts as a floral activator in the LD photoperiodic pathway. Involved in blue light-induced activation of EHD1 expression to promote flowering under SD conditions. The sequence is that of Protein HEADING DATE 3B (HD3B) from Oryza sativa subsp. japonica (Rice).